A 1147-amino-acid polypeptide reads, in one-letter code: Cellulose synthase-like protein D3 (1147 aa).

Disordered stretches follow at residues 1–33 (MSTG…PAGQ) and 259–281 (KLGG…PFKP). Composition is skewed to gly residues over residues 14–29 (GGVG…GPRG) and 262–272 (GDGGGGGGGGP). The next 2 helical transmembrane spans lie at 292 to 312 (VISP…FYLT) and 322 to 342 (ALWL…SWLL). Active-site residues include aspartate 422 and aspartate 847. The next 6 helical transmembrane spans lie at 929-949 (IFLL…FFIV), 954-974 (IAFL…GILE), 1001-1021 (LYAV…SFTL), 1045-1065 (LLIP…FAFA), 1075-1095 (WGKF…LNPF), and 1108-1128 (TIVF…WVAI).

This sequence belongs to the glycosyltransferase 2 family. Plant cellulose synthase-like D subfamily.

It is found in the golgi apparatus membrane. Its function is as follows. Thought to be a Golgi-localized beta-glycan synthase that polymerize the backbones of noncellulosic polysaccharides (hemicelluloses) of plant cell wall. The chain is Cellulose synthase-like protein D3 (CSLD3) from Oryza sativa subsp. japonica (Rice).